The sequence spans 294 residues: Cytidine deaminase (294 aa).

2 consecutive CMP/dCMP-type deaminase domains span residues 48–168 and 187–294; these read DDDA…FGPT and AETD…RVTF. 89-91 is a binding site for substrate; the sequence is NME. His-102 is a binding site for Zn(2+). The active-site Proton donor is the Glu-104. 2 residues coordinate Zn(2+): Cys-129 and Cys-132.

Belongs to the cytidine and deoxycytidylate deaminase family. In terms of assembly, homodimer. It depends on Zn(2+) as a cofactor.

The catalysed reaction is cytidine + H2O + H(+) = uridine + NH4(+). It carries out the reaction 2'-deoxycytidine + H2O + H(+) = 2'-deoxyuridine + NH4(+). This enzyme scavenges exogenous and endogenous cytidine and 2'-deoxycytidine for UMP synthesis. The protein is Cytidine deaminase of Yersinia pseudotuberculosis serotype O:1b (strain IP 31758).